The chain runs to 428 residues: Glutamate-1-semialdehyde 2,1-aminomutase (428 aa).

At Lys-267 the chain carries N6-(pyridoxal phosphate)lysine.

Belongs to the class-III pyridoxal-phosphate-dependent aminotransferase family. HemL subfamily. As to quaternary structure, homodimer. Requires pyridoxal 5'-phosphate as cofactor.

Its subcellular location is the cytoplasm. It catalyses the reaction (S)-4-amino-5-oxopentanoate = 5-aminolevulinate. Its pathway is porphyrin-containing compound metabolism; protoporphyrin-IX biosynthesis; 5-aminolevulinate from L-glutamyl-tRNA(Glu): step 2/2. This is Glutamate-1-semialdehyde 2,1-aminomutase from Trichlorobacter lovleyi (strain ATCC BAA-1151 / DSM 17278 / SZ) (Geobacter lovleyi).